We begin with the raw amino-acid sequence, 210 residues long: 3-oxo-tetronate 4-phosphate decarboxylase (210 aa).

Glu-74 serves as the catalytic Proton acceptor. Zn(2+) contacts are provided by Glu-74, His-93, and His-95. Catalysis depends on Tyr-120, which acts as the Proton donor. His-160 serves as a coordination point for Zn(2+).

It belongs to the aldolase class II family. AraD/FucA subfamily. The cofactor is Zn(2+).

It carries out the reaction 3-dehydro-4-O-phospho-D-erythronate + H(+) = dihydroxyacetone phosphate + CO2. The catalysed reaction is 3-dehydro-4-O-phospho-L-erythronate + H(+) = dihydroxyacetone phosphate + CO2. In terms of biological role, catalyzes the decarboxylation of 3-oxo-tetronate 4-phosphate to dihydroxyacetone phosphate (DHAP) and CO(2). This chain is 3-oxo-tetronate 4-phosphate decarboxylase, found in Haemophilus influenzae (strain ATCC 51907 / DSM 11121 / KW20 / Rd).